We begin with the raw amino-acid sequence, 800 residues long: Probable inorganic carbon transporter subunit DabA (800 aa).

Residues Cys329, Asp331, His488, and Cys503 each coordinate Zn(2+).

This sequence belongs to the inorganic carbon transporter (TC 9.A.2) DabA family. In terms of assembly, forms a complex with DabB. Zn(2+) is required as a cofactor.

The protein localises to the cell inner membrane. Functionally, part of an energy-coupled inorganic carbon pump. The sequence is that of Probable inorganic carbon transporter subunit DabA from Roseobacter denitrificans (strain ATCC 33942 / OCh 114) (Erythrobacter sp. (strain OCh 114)).